A 227-amino-acid polypeptide reads, in one-letter code: Atypical response regulator protein ChxR (227 aa).

The 103-residue stretch at 6-108 folds into the Response regulatory domain; that stretch reads HVLLVSEHWD…ILKSAISLFL (103 aa). The ompR/PhoB-type DNA-binding region spans 117-213; that stretch reads PESIRFGPNV…LRGVGYLFSD (97 aa).

Homodimer.

May be a global positive regulator of transcription. Binds a cis-acting element of its own promoter DNA sequence and is hence probably also involved in its own transcription activation. The recognition sequence is 5'-WHGAWNH-N(3-5)-WHGAWNH-3', where W is A/T, H is C/A/T, N is G/C/A/T and the linker length in the middle is 3 to 5 nucleotides. The polypeptide is Atypical response regulator protein ChxR (Chlamydia trachomatis serovar L2 (strain ATCC VR-902B / DSM 19102 / 434/Bu)).